Consider the following 476-residue polypeptide: Glycogen synthase (476 aa).

Lys15 contacts ADP-alpha-D-glucose.

This sequence belongs to the glycosyltransferase 1 family. Bacterial/plant glycogen synthase subfamily.

The enzyme catalyses [(1-&gt;4)-alpha-D-glucosyl](n) + ADP-alpha-D-glucose = [(1-&gt;4)-alpha-D-glucosyl](n+1) + ADP + H(+). It functions in the pathway glycan biosynthesis; glycogen biosynthesis. Synthesizes alpha-1,4-glucan chains using ADP-glucose. This is Glycogen synthase from Bacillus anthracis.